A 703-amino-acid polypeptide reads, in one-letter code: MSQEKKVFKTEWAGRPLIIETGQLAKQANGAVLVRYGDTVVLSTATASKEPRDVDFFPLMVNYEEKLYAAGKIPGGFNKREGRPGEDATLTSRLIDRPIRPLFPKGYRHDVQVISIVMSVDPDNSPEMAAMIGSSMALAVSDIPFEGPIAGVNVGLVDGELIINPDVQQREVSVLDLQVAGHFDAVNMVEAGAKEVAEDKMLEAIMFGHAEIKKLVEFQQSIIDEIQPVKSEFVPVEVDADLESKVEQLSESFGLSQAIQTQEKLAREENITAIKLKVIEAFEGEDEAVITAVNKKFDALIKEEVRRLITEEKVRPDGRRPDEIRPLDSEVGILPRVHGSGLFTRGQTQALSVATLGALGEHQIIDGLGVEEEKRYMHHYNFPNFSVGETGPIRAPGRREIGHGALGERALLQVIPDEKEFPYTIRVVSEVLESNGSSSQASICGSTLALMDAGVPIKAPVAGIAMGLVTKDENYTILSDIQGMEDALGDMDFKVAGTKEGITAIQMDIKINGLTEDILREALEQARVGRLHIMEHMLSTISEPRAELSQYAPKIEIIHINPDKIRDVIGPGGKKINEIIDATGVKLDIEQDGTVFIGSSDASMIEAAKKLIENIVREAEVGQIYMATVKRIEKFGAFVEIFPGKDALVHISQIALERINKVEDVVKLGDQFLVKVTEIDKQGRVNASRKVLLEEEKKASEEK.

2 residues coordinate Mg(2+): Asp-486 and Asp-492. A KH domain is found at 553–612 (PKIEIIHINPDKIRDVIGPGGKKINEIIDATGVKLDIEQDGTVFIGSSDASMIEAAKKLI). An S1 motif domain is found at 622–690 (GQIYMATVKR…KQGRVNASRK (69 aa)).

This sequence belongs to the polyribonucleotide nucleotidyltransferase family. Mg(2+) is required as a cofactor.

The protein resides in the cytoplasm. The enzyme catalyses RNA(n+1) + phosphate = RNA(n) + a ribonucleoside 5'-diphosphate. Its function is as follows. Involved in mRNA degradation. Catalyzes the phosphorolysis of single-stranded polyribonucleotides processively in the 3'- to 5'-direction. This chain is Polyribonucleotide nucleotidyltransferase, found in Macrococcus caseolyticus (strain JCSC5402) (Macrococcoides caseolyticum).